The primary structure comprises 449 residues: NADH-quinone oxidoreductase subunit H (449 aa).

9 helical membrane passes run 29-49 (ILLK…FAIV), 96-116 (PIFI…FAVI), 136-156 (LPVS…GLIL), 177-197 (IISY…YAGT), 211-231 (WYIV…GETN), 259-279 (FFFL…TTLF), 298-318 (WVPL…FIWL), 330-350 (FMSF…LAVA), and 365-385 (WLVG…IDPG). Basic and acidic residues predominate over residues 393 to 402 (LEEAEQRKLA). Positions 393–449 (LEEAEQRKLAEAPSLDRIPWPPPPQAAGRGRPAVSAGASANGSSTVIPADPGPRQER) are disordered. Residues 418 to 436 (AAGRGRPAVSAGASANGSS) show a composition bias toward low complexity.

It belongs to the complex I subunit 1 family. In terms of assembly, NDH-1 is composed of 14 different subunits. Subunits NuoA, H, J, K, L, M, N constitute the membrane sector of the complex.

It is found in the cell membrane. The enzyme catalyses a quinone + NADH + 5 H(+)(in) = a quinol + NAD(+) + 4 H(+)(out). Its function is as follows. NDH-1 shuttles electrons from NADH, via FMN and iron-sulfur (Fe-S) centers, to quinones in the respiratory chain. The immediate electron acceptor for the enzyme in this species is believed to be ubiquinone. Couples the redox reaction to proton translocation (for every two electrons transferred, four hydrogen ions are translocated across the cytoplasmic membrane), and thus conserves the redox energy in a proton gradient. This subunit may bind ubiquinone. This Frankia casuarinae (strain DSM 45818 / CECT 9043 / HFP020203 / CcI3) protein is NADH-quinone oxidoreductase subunit H.